Consider the following 162-residue polypeptide: Shikimate kinase (162 aa).

Residue 11–16 (GSGKSS) coordinates ATP. S15 contacts Mg(2+). The substrate site is built by D33, R57, and G80. Residue R116 coordinates ATP. R132 lines the substrate pocket.

The protein belongs to the shikimate kinase family. Monomer. Requires Mg(2+) as cofactor.

It is found in the cytoplasm. It carries out the reaction shikimate + ATP = 3-phosphoshikimate + ADP + H(+). It functions in the pathway metabolic intermediate biosynthesis; chorismate biosynthesis; chorismate from D-erythrose 4-phosphate and phosphoenolpyruvate: step 5/7. Its function is as follows. Catalyzes the specific phosphorylation of the 3-hydroxyl group of shikimic acid using ATP as a cosubstrate. The protein is Shikimate kinase of Helicobacter pylori (strain HPAG1).